We begin with the raw amino-acid sequence, 697 residues long: UBA domain-containing protein 7 (697 aa).

The tract at residues Met1–Pro94 is disordered. Over residues Ser13 to Ser32 the composition is skewed to low complexity. Residues Lys62–Lys77 show a composition bias toward basic and acidic residues. Residues Pro81 to Tyr92 are compositionally biased toward polar residues. The region spanning Lys181–Lys221 is the UBA domain. The tract at residues Pro306–Ser346 is disordered. A compositionally biased stretch (basic and acidic residues) spans Pro323–Ile333. Positions Thr334–Ser345 are enriched in polar residues. Residues Val412–Lys445 form a TPR repeat. Residues Ile547 to Lys573 are disordered. A compositionally biased stretch (polar residues) spans Thr559–Lys573. The 64-residue stretch at Cys633 to Asp696 folds into the J domain.

The sequence is that of UBA domain-containing protein 7 (ucp7) from Schizosaccharomyces pombe (strain 972 / ATCC 24843) (Fission yeast).